The sequence spans 367 residues: DNA replication and repair protein RecF (367 aa).

Residue 30-37 coordinates ATP; the sequence is GANGSGKT.

The protein belongs to the RecF family.

Its subcellular location is the cytoplasm. In terms of biological role, the RecF protein is involved in DNA metabolism; it is required for DNA replication and normal SOS inducibility. RecF binds preferentially to single-stranded, linear DNA. It also seems to bind ATP. The sequence is that of DNA replication and repair protein RecF from Pseudomonas putida (strain ATCC 47054 / DSM 6125 / CFBP 8728 / NCIMB 11950 / KT2440).